Here is a 198-residue protein sequence, read N- to C-terminus: Ribonuclease HII (198 aa).

The region spanning 10–198 (QLVAGVDEVG…PVKRALGLAS (189 aa)) is the RNase H type-2 domain. Residues Asp16, Glu17, and Asp108 each coordinate a divalent metal cation.

Belongs to the RNase HII family. Requires Mn(2+) as cofactor. Mg(2+) serves as cofactor.

The protein localises to the cytoplasm. The catalysed reaction is Endonucleolytic cleavage to 5'-phosphomonoester.. Functionally, endonuclease that specifically degrades the RNA of RNA-DNA hybrids. The polypeptide is Ribonuclease HII (Shigella boydii serotype 4 (strain Sb227)).